The primary structure comprises 492 residues: Cysteine--tRNA ligase (492 aa).

Cys-27 is a Zn(2+) binding site. Positions 29–39 (VTVYDLCHLGH) match the 'HIGH' region motif. Positions 211, 236, and 240 each coordinate Zn(2+). Residues 268-272 (KMSKS) carry the 'KMSKS' region motif. Residue Lys-271 participates in ATP binding.

Belongs to the class-I aminoacyl-tRNA synthetase family. In terms of assembly, monomer. It depends on Zn(2+) as a cofactor.

It is found in the cytoplasm. The catalysed reaction is tRNA(Cys) + L-cysteine + ATP = L-cysteinyl-tRNA(Cys) + AMP + diphosphate. This Prochlorococcus marinus subsp. pastoris (strain CCMP1986 / NIES-2087 / MED4) protein is Cysteine--tRNA ligase.